Reading from the N-terminus, the 419-residue chain is MGACISFFSSSSPSKTGLHSHATTNNHSNGTEFSSTTGATTNSSVGQQSQFSDISTGIISDSGKLLESPNLKVYNFLDLKTATKNFKPDSMLGQGGFGKVYRGWVDATTLAPSRVGSGMIVAIKRLNSESVQGFAEWRSEVNFLGMLSHRNLVKLLGYCREDKELLLVYEFMPKGSLESHLFRRNDPFPWDLRIKIVIGAARGLAFLHSLQREVIYRDFKASNILLDSNYDAKLSDFGLAKLGPADEKSHVTTRIMGTYGYAAPEYMATGHLYVKSDVFAFGVVLLEIMTGLTAHNTKRPRGQESLVDWLRPELSNKHRVKQIMDKGIKGQYTTKVATEMARITLSCIEPDPKNRPHMKEVVEVLEHIQGLNVVPNRSSTKQAVANSSRSSPHHYRYKAGALGAERKRATPGRFGSVEK.

Residue glycine 2 is the site of N-myristoyl glycine attachment. A lipid anchor (S-palmitoyl cysteine) is attached at cysteine 4. The tract at residues 8-48 (FSSSSPSKTGLHSHATTNNHSNGTEFSSTTGATTNSSVGQQ) is disordered. Residues 15-48 (KTGLHSHATTNNHSNGTEFSSTTGATTNSSVGQQ) show a composition bias toward polar residues. The Protein kinase domain maps to 86–368 (FKPDSMLGQG…KEVVEVLEHI (283 aa)). 92–100 (LGQGGFGKV) provides a ligand contact to ATP. At serine 117 the chain carries Phosphoserine. Lysine 124 serves as a coordination point for ATP. A Phosphotyrosine modification is found at tyrosine 169. The active-site Proton acceptor is aspartate 218. A Phosphoserine modification is found at serine 222. A phosphothreonine mark is found at threonine 253 and threonine 258. Tyrosine 266 is modified (phosphotyrosine). The segment covering 378–390 (SSTKQAVANSSRS) has biased composition (polar residues). The disordered stretch occupies residues 378 to 419 (SSTKQAVANSSRSSPHHYRYKAGALGAERKRATPGRFGSVEK).

It belongs to the protein kinase superfamily. Ser/Thr protein kinase family. As to quaternary structure, interacts with SOBIR1/EVR and RLK5/HAE. In terms of processing, autophosphorylated on serine, threonine and tyrosine residues.

The protein localises to the cell membrane. Its subcellular location is the nucleus. The enzyme catalyses L-seryl-[protein] + ATP = O-phospho-L-seryl-[protein] + ADP + H(+). It catalyses the reaction L-threonyl-[protein] + ATP = O-phospho-L-threonyl-[protein] + ADP + H(+). Functionally, acts as a spatial inhibitor of signaling that modulates abscission zone cell adhesion and expansion. Acts both directly and indirectly by physically interacting with RLK5/HAE and SOBIR1/EVR at the cell surface. The protein is Probable serine/threonine-protein kinase CST of Arabidopsis thaliana (Mouse-ear cress).